We begin with the raw amino-acid sequence, 94 residues long: Transcription factor CPC (94 aa).

The segment at 1–10 (MFRSDKAEKM) is S1, required for cell-to-cell movements. Residues 1-11 (MFRSDKAEKMD) are compositionally biased toward basic and acidic residues. Residues 1–25 (MFRSDKAEKMDKRRRRQSKAKASCS) are disordered. One can recognise a Myb-like domain in the interval 30–80 (SIEWEAVKMSEEEEDLISRMYKLVGDRWELIAGRIPGRTPEEIERYWLMKH). Positions 76-79 (WLMK) are S2, required for cell-to-cell movements and nuclear localization.

In terms of assembly, interacts with GL3 and BHLH2. Interacts with SIEL. In terms of tissue distribution, expressed in trichomes and in young developing leaves, as well as in root hair and stele cells (pericycle and vascular tissues). Expressed in epidermal root hairless cells (atrichoblasts) and moves to root hair cells (trichoblasts) by a cell-to-cell movement through plasmodesmata (at protein level).

It is found in the nucleus. Functionally, transcription factor. Determines the fate of epidermal cell differentiation. Represses trichome development by lateral inhibition. Together with GL3 or BHLH2, promotes the formation of hair developing cells (H position) in root epidermis, probably by inhibiting non-hair cell formation. Represses the expression of GL2 and WER in H cells. Positively regulates stomatal formation in the hypocotyl. The polypeptide is Transcription factor CPC (CPC) (Arabidopsis thaliana (Mouse-ear cress)).